The following is a 264-amino-acid chain: S-adenosylmethionine decarboxylase proenzyme (264 aa).

The Schiff-base intermediate with substrate; via pyruvic acid role is filled by S112. The residue at position 112 (S112) is a Pyruvic acid (Ser); by autocatalysis. Catalysis depends on H117, which acts as the Proton acceptor; for processing activity. Catalysis depends on C140, which acts as the Proton donor; for catalytic activity.

This sequence belongs to the prokaryotic AdoMetDC family. Type 2 subfamily. As to quaternary structure, heterooctamer of four alpha and four beta chains arranged as a tetramer of alpha/beta heterodimers. The cofactor is pyruvate. In terms of processing, is synthesized initially as an inactive proenzyme. Formation of the active enzyme involves a self-maturation process in which the active site pyruvoyl group is generated from an internal serine residue via an autocatalytic post-translational modification. Two non-identical subunits are generated from the proenzyme in this reaction, and the pyruvate is formed at the N-terminus of the alpha chain, which is derived from the carboxyl end of the proenzyme. The post-translation cleavage follows an unusual pathway, termed non-hydrolytic serinolysis, in which the side chain hydroxyl group of the serine supplies its oxygen atom to form the C-terminus of the beta chain, while the remainder of the serine residue undergoes an oxidative deamination to produce ammonia and the pyruvoyl group blocking the N-terminus of the alpha chain.

The catalysed reaction is S-adenosyl-L-methionine + H(+) = S-adenosyl 3-(methylsulfanyl)propylamine + CO2. It participates in amine and polyamine biosynthesis; S-adenosylmethioninamine biosynthesis; S-adenosylmethioninamine from S-adenosyl-L-methionine: step 1/1. Functionally, catalyzes the decarboxylation of S-adenosylmethionine to S-adenosylmethioninamine (dcAdoMet), the propylamine donor required for the synthesis of the polyamines spermine and spermidine from the diamine putrescine. The chain is S-adenosylmethionine decarboxylase proenzyme from Enterobacter sp. (strain 638).